The primary structure comprises 410 residues: Elongation factor Tu, chloroplastic (410 aa).

Residues 10–215 (KPHVNIGTIG…AVDQYIPTPK (206 aa)) form the tr-type G domain. Residues 19–26 (GHVDHGKT) are G1. 19 to 26 (GHVDHGKT) is a GTP binding site. A Mg(2+)-binding site is contributed by Thr26. Residues 61 to 65 (GITIN) form a G2 region. The G3 stretch occupies residues 82–85 (DCPG). GTP contacts are provided by residues 82-86 (DCPGH) and 137-140 (NKQD). Positions 137-140 (NKQD) are G4. Positions 175 to 177 (SAL) are G5.

It belongs to the TRAFAC class translation factor GTPase superfamily. Classic translation factor GTPase family. EF-Tu/EF-1A subfamily.

It is found in the plastid. It localises to the chloroplast. It catalyses the reaction GTP + H2O = GDP + phosphate + H(+). Its function is as follows. GTP hydrolase that promotes the GTP-dependent binding of aminoacyl-tRNA to the A-site of ribosomes during protein biosynthesis. This is Elongation factor Tu, chloroplastic (tufA) from Nephroselmis olivacea (Green alga).